Reading from the N-terminus, the 414-residue chain is Glucose-1-phosphate adenylyltransferase (414 aa).

Alpha-D-glucose 1-phosphate contacts are provided by residues glycine 164, 181 to 182 (EK), and serine 199.

This sequence belongs to the bacterial/plant glucose-1-phosphate adenylyltransferase family. In terms of assembly, homotetramer.

The enzyme catalyses alpha-D-glucose 1-phosphate + ATP + H(+) = ADP-alpha-D-glucose + diphosphate. Its pathway is glycan biosynthesis; glycogen biosynthesis. Functionally, involved in the biosynthesis of ADP-glucose, a building block required for the elongation reactions to produce glycogen. Catalyzes the reaction between ATP and alpha-D-glucose 1-phosphate (G1P) to produce pyrophosphate and ADP-Glc. The protein is Glucose-1-phosphate adenylyltransferase of Kocuria rhizophila (strain ATCC 9341 / DSM 348 / NBRC 103217 / DC2201).